Here is a 64-residue protein sequence, read N- to C-terminus: Prokaryotic ubiquitin-like protein Pup (64 aa).

Residues Met1–Ser10 show a composition bias toward polar residues. A disordered region spans residues Met1–Asn32. Residues Asp20–Tyr58 are ARC ATPase binding. Gln64 carries the deamidated glutamine modification. Gln64 is covalently cross-linked (Isoglutamyl lysine isopeptide (Gln-Lys) (interchain with K-? in acceptor proteins)).

It belongs to the prokaryotic ubiquitin-like protein family. As to quaternary structure, strongly interacts with the proteasome-associated ATPase ARC through a hydrophobic interface; the interacting region of Pup lies in its C-terminal half. There is one Pup binding site per ARC hexamer ring. In terms of processing, is modified by deamidation of its C-terminal glutamine to glutamate by the deamidase Dop, a prerequisite to the subsequent pupylation process.

The protein operates within protein degradation; proteasomal Pup-dependent pathway. In terms of biological role, protein modifier that is covalently attached to lysine residues of substrate proteins, thereby targeting them for proteasomal degradation. The tagging system is termed pupylation. The chain is Prokaryotic ubiquitin-like protein Pup from Corynebacterium diphtheriae (strain ATCC 700971 / NCTC 13129 / Biotype gravis).